A 191-amino-acid polypeptide reads, in one-letter code: ATP-dependent dethiobiotin synthetase BioD 2 (191 aa).

Position 13 to 18 (13 to 18) interacts with ATP; it reads DVGKTI. Thr-17 is a binding site for Mg(2+). Residue Lys-38 is part of the active site. A substrate-binding site is contributed by Thr-42. ATP contacts are provided by residues Asp-50 and 115–118; that span reads EGAG. Asp-50 and Glu-115 together coordinate Mg(2+).

The protein belongs to the dethiobiotin synthetase family. In terms of assembly, homodimer. Requires Mg(2+) as cofactor.

The protein resides in the cytoplasm. It catalyses the reaction (7R,8S)-7,8-diammoniononanoate + CO2 + ATP = (4R,5S)-dethiobiotin + ADP + phosphate + 3 H(+). It participates in cofactor biosynthesis; biotin biosynthesis; biotin from 7,8-diaminononanoate: step 1/2. Catalyzes a mechanistically unusual reaction, the ATP-dependent insertion of CO2 between the N7 and N8 nitrogen atoms of 7,8-diaminopelargonic acid (DAPA, also called 7,8-diammoniononanoate) to form a ureido ring. The protein is ATP-dependent dethiobiotin synthetase BioD 2 of Haemophilus influenzae (strain ATCC 51907 / DSM 11121 / KW20 / Rd).